The following is a 159-amino-acid chain: 2-C-methyl-D-erythritol 2,4-cyclodiphosphate synthase (159 aa).

Positions 10 and 12 each coordinate a divalent metal cation. Residues Asp10–His12 and His37–Ser38 contribute to the 4-CDP-2-C-methyl-D-erythritol 2-phosphate site. His45 provides a ligand contact to a divalent metal cation. 4-CDP-2-C-methyl-D-erythritol 2-phosphate-binding positions include Asp59–Gly61, Phe64–Asp68, Ala103–Leu109, Thr135–Glu138, Phe142, and Arg145.

The protein belongs to the IspF family. Homotrimer. Requires a divalent metal cation as cofactor.

It carries out the reaction 4-CDP-2-C-methyl-D-erythritol 2-phosphate = 2-C-methyl-D-erythritol 2,4-cyclic diphosphate + CMP. It participates in isoprenoid biosynthesis; isopentenyl diphosphate biosynthesis via DXP pathway; isopentenyl diphosphate from 1-deoxy-D-xylulose 5-phosphate: step 4/6. Its function is as follows. Involved in the biosynthesis of isopentenyl diphosphate (IPP) and dimethylallyl diphosphate (DMAPP), two major building blocks of isoprenoid compounds. Catalyzes the conversion of 4-diphosphocytidyl-2-C-methyl-D-erythritol 2-phosphate (CDP-ME2P) to 2-C-methyl-D-erythritol 2,4-cyclodiphosphate (ME-CPP) with a corresponding release of cytidine 5-monophosphate (CMP). This chain is 2-C-methyl-D-erythritol 2,4-cyclodiphosphate synthase, found in Francisella tularensis subsp. holarctica (strain OSU18).